Here is a 140-residue protein sequence, read N- to C-terminus: Large ribosomal subunit protein uL13 (140 aa).

In terms of assembly, part of the 50S ribosomal subunit.

Functionally, this protein is one of the early assembly proteins of the 50S ribosomal subunit, although it is not seen to bind rRNA by itself. It is important during the early stages of 50S assembly. This is Large ribosomal subunit protein uL13 from Thermus thermophilus (strain ATCC 27634 / DSM 579 / HB8).